The chain runs to 279 residues: Lactose operon transcription activator (279 aa).

The HTH araC/xylS-type domain maps to 174-272 (QHAVDFINTN…EISASEYRHH (99 aa)). 2 DNA-binding regions (H-T-H motif) span residues 191-212 (EDVA…KKNL) and 239-262 (ISDI…TKHF).

In terms of biological role, transcriptional regulator of the lacPH genes for lactose utilization. The sequence is that of Lactose operon transcription activator (lacR) from Staphylococcus xylosus.